Here is a 513-residue protein sequence, read N- to C-terminus: ATP synthase subunit alpha (513 aa).

An ATP-binding site is contributed by 169-176 (GDRQTGKT).

The protein belongs to the ATPase alpha/beta chains family. In terms of assembly, F-type ATPases have 2 components, CF(1) - the catalytic core - and CF(0) - the membrane proton channel. CF(1) has five subunits: alpha(3), beta(3), gamma(1), delta(1), epsilon(1). CF(0) has three main subunits: a(1), b(2) and c(9-12). The alpha and beta chains form an alternating ring which encloses part of the gamma chain. CF(1) is attached to CF(0) by a central stalk formed by the gamma and epsilon chains, while a peripheral stalk is formed by the delta and b chains.

The protein localises to the cell inner membrane. It carries out the reaction ATP + H2O + 4 H(+)(in) = ADP + phosphate + 5 H(+)(out). In terms of biological role, produces ATP from ADP in the presence of a proton gradient across the membrane. The alpha chain is a regulatory subunit. This Haemophilus influenzae (strain 86-028NP) protein is ATP synthase subunit alpha.